Consider the following 199-residue polypeptide: Copper transport protein CTR4 (199 aa).

2 helical membrane passes run 62–82 (KGMFAGSIIGIFFLCVLIELI) and 152–172 (AFFVMLLGMYFNVIVLIFIFL).

Belongs to the copper transporter (Ctr) (TC 1.A.56) family. SLC31A subfamily.

The protein resides in the membrane. Required for high affinity copper (probably reduced Cu I) transport into the cell. Plays a role in fungal pathogenesis during host infection. The polypeptide is Copper transport protein CTR4 (Cryptococcus neoformans var. grubii serotype A (strain H99 / ATCC 208821 / CBS 10515 / FGSC 9487) (Filobasidiella neoformans var. grubii)).